We begin with the raw amino-acid sequence, 364 residues long: MNNLLLYCRPGFEKEAAAEITERASNMQCYGFARVKDDSGYVIFELYDEEQADLLARKLPFRELIFIRQMLVVTHELKDLDVADRISPIIEATSEYTICGDLRVETADTNEAKELSAFCRKFTVPLRQALRSKELLTKKETPHRPVFHAFFMANDHLLLGYSYSFNNSEFHMGIPRLRCPPDAPSRSSLKLEEAFYVFVPREEWDLRLTSGMKAVDLGACPGGWTHQLVRRGMMVTAVDNGTMAQSLMDTGQVKHLRDDGFVWRPSKKNIYWLVCDMVEKPARVVHMIADWFRENDCQEAMFNLKLPMKKRYAEAVHNIEVLRGLLKEVDNAFVIQAKQLYHDREEITVHVYNKYWVSKLEAKE.

S-adenosyl-L-methionine is bound by residues Ser187, 220 to 223, Asp239, Asp259, and Asp276; that span reads CPGG. Lys305 serves as the catalytic Proton acceptor.

It belongs to the class I-like SAM-binding methyltransferase superfamily. RNA methyltransferase RlmE family. RlmM subfamily. As to quaternary structure, monomer.

It is found in the cytoplasm. It carries out the reaction cytidine(2498) in 23S rRNA + S-adenosyl-L-methionine = 2'-O-methylcytidine(2498) in 23S rRNA + S-adenosyl-L-homocysteine + H(+). Its function is as follows. Catalyzes the 2'-O-methylation at nucleotide C2498 in 23S rRNA. This is Ribosomal RNA large subunit methyltransferase M from Aeromonas salmonicida (strain A449).